The chain runs to 389 residues: Phospho-N-acetylmuramoyl-pentapeptide-transferase (389 aa).

Transmembrane regions (helical) follow at residues 25-45, 73-93, 97-117, 135-155, 190-210, 222-242, 258-278, 286-306, 311-331, and 366-386; these read RAVM…PWVI, TMGG…WADL, FIWI…VDDY, FWQT…VSEI, VSYP…IVGS, GLVI…AYVM, GAGE…AFLW, VFMG…IAVI, IVLF…MMQV, and QVVV…LSSL.

It belongs to the glycosyltransferase 4 family. MraY subfamily. Mg(2+) is required as a cofactor.

The protein localises to the cell inner membrane. The catalysed reaction is UDP-N-acetyl-alpha-D-muramoyl-L-alanyl-gamma-D-glutamyl-meso-2,6-diaminopimeloyl-D-alanyl-D-alanine + di-trans,octa-cis-undecaprenyl phosphate = di-trans,octa-cis-undecaprenyl diphospho-N-acetyl-alpha-D-muramoyl-L-alanyl-D-glutamyl-meso-2,6-diaminopimeloyl-D-alanyl-D-alanine + UMP. It functions in the pathway cell wall biogenesis; peptidoglycan biosynthesis. Its function is as follows. Catalyzes the initial step of the lipid cycle reactions in the biosynthesis of the cell wall peptidoglycan: transfers peptidoglycan precursor phospho-MurNAc-pentapeptide from UDP-MurNAc-pentapeptide onto the lipid carrier undecaprenyl phosphate, yielding undecaprenyl-pyrophosphoryl-MurNAc-pentapeptide, known as lipid I. This is Phospho-N-acetylmuramoyl-pentapeptide-transferase from Polynucleobacter asymbioticus (strain DSM 18221 / CIP 109841 / QLW-P1DMWA-1) (Polynucleobacter necessarius subsp. asymbioticus).